The primary structure comprises 306 residues: Putative transcriptional regulator (306 aa).

An HTH lysR-type domain is found at 1–61; the sequence is MIKRNLNDLL…TRTTRSVSPT (61 aa). Residues 21-40 constitute a DNA-binding region (H-T-H motif); the sequence is FTRAAAQLGVTQSALSQSIS.

This sequence belongs to the LysR transcriptional regulatory family.

May have a role in the regulation of oprD expression. The polypeptide is Putative transcriptional regulator (Pseudomonas aeruginosa (strain ATCC 15692 / DSM 22644 / CIP 104116 / JCM 14847 / LMG 12228 / 1C / PRS 101 / PAO1)).